Reading from the N-terminus, the 456-residue chain is uncharacterized protein (456 aa).

Residues 5 to 63 (LVKKGQQISLKIKRLGINGEGIGYYKKLIIFVPGALPKEEVTATITNVTPKFAEGTLQS) form the TRAM domain. The [4Fe-4S] cluster site is built by Cys-76, Cys-82, Cys-85, and Cys-165. S-adenosyl-L-methionine contacts are provided by Gln-289, Tyr-318, Asp-339, and Asp-387. Residue Cys-414 is the Nucleophile of the active site.

This sequence belongs to the class I-like SAM-binding methyltransferase superfamily. RNA M5U methyltransferase family.

This is an uncharacterized protein from Enterococcus faecalis (strain ATCC 700802 / V583).